We begin with the raw amino-acid sequence, 128 residues long: Small ribosomal subunit protein uS12 (128 aa).

The interval 1–29 (MPTINQLIRKGREPKERKSKSPALMGNPQ) is disordered. A 3-methylthioaspartic acid modification is found at Asp-89. The tract at residues 106 to 128 (GVEGRRQGRSKYGAKRPKEGGKK) is disordered.

The protein belongs to the universal ribosomal protein uS12 family. Part of the 30S ribosomal subunit. Contacts proteins S8 and S17. May interact with IF1 in the 30S initiation complex.

Its function is as follows. With S4 and S5 plays an important role in translational accuracy. Interacts with and stabilizes bases of the 16S rRNA that are involved in tRNA selection in the A site and with the mRNA backbone. Located at the interface of the 30S and 50S subunits, it traverses the body of the 30S subunit contacting proteins on the other side and probably holding the rRNA structure together. The combined cluster of proteins S8, S12 and S17 appears to hold together the shoulder and platform of the 30S subunit. This Dictyoglomus turgidum (strain DSM 6724 / Z-1310) protein is Small ribosomal subunit protein uS12.